We begin with the raw amino-acid sequence, 2465 residues long: Highly reducing polyketide synthase milA (2465 aa).

The Ketosynthase family 3 (KS3) domain maps to 1–434 (MEPIAIVGSA…GANCHVILEG (434 aa)). Active-site for beta-ketoacyl synthase activity residues include cysteine 172, histidine 311, and histidine 355. The disordered stretch occupies residues 450–476 (KPSLSSSPSLSPTSTSPPTPRTPANSL). The span at 451–463 (PSLSSSPSLSPTS) shows a compositional bias: low complexity. The malonyl-CoA:ACP transacylase (MAT) domain stretch occupies residues 567–888 (VFTGQGAQWA…CGTLSRAVDD (322 aa)). Positions 957–1096 (HPLLGVRTNT…GKVQLFVGGD (140 aa)) are N-terminal hotdog fold. The segment at 957–1265 (HPLLGVRTNT…LTVSPVAPVT (309 aa)) is dehydratase (DH) domain. Positions 957–1267 (HPLLGVRTNT…VSPVAPVTAD (311 aa)) constitute a PKS/mFAS DH domain. The active-site Proton acceptor; for dehydratase activity is histidine 989. Positions 1111 to 1267 (LNEIDVDTFY…VSPVAPVTAD (157 aa)) are C-terminal hotdog fold. Aspartate 1174 acts as the Proton donor; for dehydratase activity in catalysis. Residues 1334-1367 (HSTNGLTNGHASTNGHGSTNGHISTNGHSTNGDV) are disordered. Residues 2095-2269 (TYFLVGMAGS…AASVINLTGV (175 aa)) are ketoreductase (KR)domain. One can recognise a Carrier domain in the interval 2384 to 2459 (DMIFRAFQTV…QVVWSVVHQI (76 aa)). The residue at position 2419 (serine 2419) is an O-(pantetheine 4'-phosphoryl)serine.

The cofactor is pantetheine 4'-phosphate.

It catalyses the reaction 10 malonyl-CoA + acetyl-CoA + 3 AH2 + 8 NADPH + 18 H(+) = cordypyrone A + 3 A + 10 CO2 + 8 NADP(+) + 11 CoA + 8 H2O. It functions in the pathway secondary metabolite biosynthesis. Its function is as follows. Highly reducing polyketide synthase (HR-PKS); part of the gene cluster that mediates the biosynthesis of cordypyrones A and B, 2 pyrones that show modest activities against pathogenic bacteria including methicillin-resistant Staphylococcus aureus (MRSA), Mycobacterium tuberculosis and Bacillus cereus. The HR-PKS milA catalyzes the formation of cordypyrones A via condensation of one acetate with 10 malonate units. Since milA lacks an enoyl reductase domain, the 2 beta-keto processing domains DH and KR of milA collaborate with the trans-enoyl reductase milB to catalyze the different levels of reduction. The cytochrome P450 monooxygenase milC then hydroxylates the C-22 of cordypyrones A to yield cordypyrones B. This Cordyceps militaris (strain CM01) (Caterpillar fungus) protein is Highly reducing polyketide synthase milA.